The primary structure comprises 165 residues: MQPSTNIFSLHGCPPSYLSHIPTSSPFCGQNPNPFFSFETGVNTSQFMSLISSNNSTSDEAEENHKEIINERKQKRKISNRESARRSRMRKQRQVDELWSQVMWLRDENHQLLRKLNCVLESQEKVIEENVQLKEETTELKQMISDMQLQNQSPFSCIRDDDDVV.

A bZIP domain is found at 70–133 (NERKQKRKIS…EKVIEENVQL (64 aa)). Residues 72–93 (RKQKRKISNRESARRSRMRKQR) are basic motif. Residues 98-112 (LWSQVMWLRDENHQL) form a leucine-zipper region.

As to quaternary structure, forms heterodimers with BZIP34 and BZIP61.

Its subcellular location is the nucleus. Functionally, probable transcription factor involved in somatic embryogenesis. Acts as a positive regulator of BHLH109. The protein is Basic leucine zipper 43 of Arabidopsis thaliana (Mouse-ear cress).